The primary structure comprises 396 residues: ATP-dependent RNA helicase eIF4A (396 aa).

The Q motif motif lies at 22–50 (YSFDDLKLKEELLRGIFGYGFVEPSAIQQ). One can recognise a Helicase ATP-binding domain in the interval 53 to 223 (ILPIIEGKDV…SKFMKDPVRI (171 aa)). Residue 66–73 (AQSGTGKT) coordinates ATP. The short motif at 171-174 (DEAD) is the DEAD box element. The 162-residue stretch at 234 to 395 (GIGQYYVNVE…ELPSSISELF (162 aa)) folds into the Helicase C-terminal domain.

It belongs to the DEAD box helicase family. eIF4A subfamily. Component of the eIF4F complex, which composition varies with external and internal environmental conditions. It is composed of at least eIF4A, eIF4E and eIF4G.

Its subcellular location is the cytoplasm. It catalyses the reaction ATP + H2O = ADP + phosphate + H(+). In terms of biological role, ATP-dependent RNA helicase which is a subunit of the eIF4F complex involved in cap recognition and is required for mRNA binding to ribosome. In the current model of translation initiation, eIF4A unwinds RNA secondary structures in the 5'-UTR of mRNAs which is necessary to allow efficient binding of the small ribosomal subunit, and subsequent scanning for the initiator codon. This is ATP-dependent RNA helicase eIF4A (TIF1) from Kluyveromyces lactis (strain ATCC 8585 / CBS 2359 / DSM 70799 / NBRC 1267 / NRRL Y-1140 / WM37) (Yeast).